A 617-amino-acid polypeptide reads, in one-letter code: MADLPQKVSNLSINNKENGGGGGKSSYVPPHLRSRGKPSFERSTPKQEDKVTGGDFFRRAGRQTGNNGGFFGFSKERNGGTSANYNRGGSSNYKSSGNRWVNGKHIPGPKNAKLEAELFGVHDDPDYHSSGIKFDNYDNIPVDASGKDVPEPILDFSSPPLDELLMENIKLASFTKPTPVQKYSIPIVTKGRDLMACAQTGSGKTGGFLFPLFTELFRSGPSPVPEKAQSFYSRKGYPSALVLAPTRELATQIFEEARKFTYRSWVRPCVVYGGAPIGNQMREVDRGCDLLVATPGRLNDLLERGKVSLANIKYLVLDEADRMLDMGFEPQIRHIVEECDMPSVENRQTLMFSATFPVDIQHLARDFLDNYIFLSVGRVGSTSENITQRILYVDDMDKKSALLDLLSAEHKGLTLIFVETKRMADQLTDFLIMQNFKATAIHGDRTQAERERALSAFKANVADILVATAVAARGLDIPNVTHVINYDLPSDIDDYVHRIGRTGRAGNTGVATSFFNSNNQNIVKGLMEILNEANQEVPTFLSDLSRQNSRGGRTRGGGGFFNSRNNGSRDYRKHGGNGSFGSTRPRNTGTSNWGSIGGGFRNDNEKNGYGNSNASWW.

Residues 1-90 (MADLPQKVSN…TSANYNRGGS (90 aa)) form a disordered region. Residues 7-17 (KVSNLSINNKE) show a composition bias toward polar residues. The span at 38-58 (PSFERSTPKQEDKVTGGDFFR) shows a compositional bias: basic and acidic residues. The span at 79–90 (GGTSANYNRGGS) shows a compositional bias: polar residues. Positions 154-182 (LDFSSPPLDELLMENIKLASFTKPTPVQK) match the Q motif motif. The Helicase ATP-binding domain occupies 185 to 374 (IPIVTKGRDL…RDFLDNYIFL (190 aa)). 198–205 (AQTGSGKT) provides a ligand contact to ATP. Residues 318-321 (DEAD) carry the DEAD box motif. The Helicase C-terminal domain maps to 385–545 (NITQRILYVD…EVPTFLSDLS (161 aa)). A disordered region spans residues 542 to 617 (SDLSRQNSRG…GYGNSNASWW (76 aa)). Residues 580 to 594 (FGSTRPRNTGTSNWG) are compositionally biased toward polar residues.

Belongs to the DEAD box helicase family. DDX3/DED1 subfamily.

The protein resides in the cytoplasm. The enzyme catalyses ATP + H2O = ADP + phosphate + H(+). Its function is as follows. ATP-binding RNA helicase involved in translation initiation. Remodels RNA in response to ADP and ATP concentrations by facilitating disruption, but also formation of RNA duplexes. Redundant to DED1, may be required in conditions in which DED1 expression is decreased. The protein is ATP-dependent RNA helicase DBP1 (DBP1) of Saccharomyces cerevisiae (strain ATCC 204508 / S288c) (Baker's yeast).